Here is a 197-residue protein sequence, read N- to C-terminus: RNA polymerase II subunit A C-terminal domain phosphatase ssup-72 (197 aa).

Phosphoserine is present on S39.

Belongs to the SSU72 phosphatase family. As to quaternary structure, may interact with synd-1 (via C-terminus); the interaction may prevent ssup-72 binding to RNA polymerase II ama-1. May interact with RNA polymerase II ama-1. May be phosphorylated by kin-20. As to expression, expressed in epidermis, intestine and nervous system.

The protein resides in the nucleus. It catalyses the reaction O-phospho-L-seryl-[protein] + H2O = L-seryl-[protein] + phosphate. It carries out the reaction O-phospho-L-threonyl-[protein] + H2O = L-threonyl-[protein] + phosphate. Protein phosphatase that dephosphorylates 'Ser-5' of the heptad repeats YSPTSPS in the C-terminal domain of the large RNA polymerase II subunit ama-1. By regulating the phosphorylation status of ama-1 and thus ama-1 binding to specific polyadenylation sites, regulates alternative polyadenylation of pre-mRNAs, including unc-44 and dlk-1 mRNAs. This results in the tissue-specific expression of unc-44 isoforms. The chain is RNA polymerase II subunit A C-terminal domain phosphatase ssup-72 from Caenorhabditis elegans.